Consider the following 199-residue polypeptide: Peptidyl-tRNA hydrolase (199 aa).

Y15 serves as a coordination point for tRNA. The active-site Proton acceptor is H20. TRNA is bound by residues Y66, N68, and N114.

The protein belongs to the PTH family. As to quaternary structure, monomer.

Its subcellular location is the cytoplasm. It carries out the reaction an N-acyl-L-alpha-aminoacyl-tRNA + H2O = an N-acyl-L-amino acid + a tRNA + H(+). Its function is as follows. Hydrolyzes ribosome-free peptidyl-tRNAs (with 1 or more amino acids incorporated), which drop off the ribosome during protein synthesis, or as a result of ribosome stalling. In terms of biological role, catalyzes the release of premature peptidyl moieties from peptidyl-tRNA molecules trapped in stalled 50S ribosomal subunits, and thus maintains levels of free tRNAs and 50S ribosomes. The polypeptide is Peptidyl-tRNA hydrolase (Burkholderia multivorans (strain ATCC 17616 / 249)).